Consider the following 310-residue polypeptide: 3,5-dioxohexanoate:acetyl-CoA acetone transferase (310 aa).

Positions 49, 51, and 258 each coordinate Zn(2+).

The protein belongs to the BKACE family. It depends on Zn(2+) as a cofactor.

The enzyme catalyses 3,5-dioxohexanoate + acetyl-CoA = acetoacetyl-CoA + acetoacetate. Catalyzes the condensation of 3,5-dioxohexanoate and acetyl-CoA, forming acetoacetate and acetoacetyl-CoA. May be involved in fatty acid biosynthesis rescue via triacetic acid lactone. The sequence is that of 3,5-dioxohexanoate:acetyl-CoA acetone transferase from Paraburkholderia graminis (strain ATCC 700544 / DSM 17151 / LMG 18924 / NCIMB 13744 / C4D1M).